Consider the following 643-residue polypeptide: Cytoplasmic dynein 1 intermediate chain 1 (643 aa).

2 stretches are compositionally biased toward basic and acidic residues: residues 1 to 13 and 20 to 60; these read MSDK…ELER and QIRE…RETE. 2 disordered regions span residues 1 to 65 and 96 to 123; these read MSDK…LLQS and MSPS…RTLQ. Ser2 carries the post-translational modification N-acetylserine. An interaction with DCTN1 region spans residues 2–123; the sequence is SDKSDLKAEL…DLGPLTRTLQ (122 aa). Phosphoserine is present on residues Ser50 and Ser100. Over residues 96 to 107 the composition is skewed to low complexity; sequence MSPSSKSVSTPS. At Thr105 the chain carries Phosphothreonine. Residues Ser107 and Ser111 each carry the phosphoserine modification. An interaction with DYNLT1 region spans residues 145–161; the sequence is KLGVSKVTQVDFLPREV. Residues 167 to 219 are disordered; the sequence is ETQTPLATHQSEEDEEDEEMVEPKVGHDSELENQDKKQETKEAPPRELTEEEK. Position 174 is a phosphothreonine (Thr174). 2 positions are modified to phosphoserine: Ser177 and Ser195. Residues 187–219 are compositionally biased toward basic and acidic residues; sequence VEPKVGHDSELENQDKKQETKEAPPRELTEEEK. 7 WD repeats span residues 283–332, 336–376, 385–426, 435–475, 480–525, 528–568, and 574–613; these read SKHR…TTPE, HCQS…RTPV, AHTH…TPQE, SKPV…AGIG, GHQG…PLYS, DNAD…EVPT, and EGAY…VPHN. Ser633 is modified (phosphoserine).

It belongs to the dynein intermediate chain family. Homodimer. The cytoplasmic dynein 1 complex consists of two catalytic heavy chains (HCs) and a number of non-catalytic subunits presented by intermediate chains (ICs), light intermediate chains (LICs) and light chains (LCs); the composition seems to vary in respect to the IC, LIC and LC composition. The heavy chain homodimer serves as a scaffold for the probable homodimeric assembly of the respective non-catalytic subunits. The ICs and LICs bind directly to the HC dimer and the LCs assemble on the IC dimer. Isoform 1, isoform 2 and isoform 3 interact with DYNC1H1. Isoform 1, isoform 2 and isoform 3 interact with DYNLT3. Isoform 1, isoform 2 and isoform 3 interact with DYNLT1. Interacts with DCTN1. Interacts with MCRS1; the interaction is required for the proper distribution of centriolar satellites. High levels seen in the brain and testis, while a lower level expression is seen in the liver, spleen, kidney, lung, skeletal muscle and heart.

It localises to the cytoplasm. The protein resides in the chromosome. Its subcellular location is the centromere. The protein localises to the kinetochore. It is found in the cytoskeleton. It localises to the spindle pole. Its function is as follows. Acts as one of several non-catalytic accessory components of the cytoplasmic dynein 1 complex that are thought to be involved in linking dynein to cargos and to adapter proteins that regulate dynein function. Cytoplasmic dynein 1 acts as a motor for the intracellular retrograde motility of vesicles and organelles along microtubules. The intermediate chains mediate the binding of dynein to dynactin via its 150 kDa component (p150-glued) DCTN1. May play a role in mediating the interaction of cytoplasmic dynein with membranous organelles and kinetochores. This chain is Cytoplasmic dynein 1 intermediate chain 1 (Dync1i1), found in Rattus norvegicus (Rat).